The primary structure comprises 253 residues: tRNA pseudouridine synthase A (253 aa).

Catalysis depends on D51, which acts as the Nucleophile. Y110 contributes to the substrate binding site.

This sequence belongs to the tRNA pseudouridine synthase TruA family. Homodimer.

The enzyme catalyses uridine(38/39/40) in tRNA = pseudouridine(38/39/40) in tRNA. Formation of pseudouridine at positions 38, 39 and 40 in the anticodon stem and loop of transfer RNAs. The chain is tRNA pseudouridine synthase A from Wolinella succinogenes (strain ATCC 29543 / DSM 1740 / CCUG 13145 / JCM 31913 / LMG 7466 / NCTC 11488 / FDC 602W) (Vibrio succinogenes).